We begin with the raw amino-acid sequence, 426 residues long: Tol-Pal system protein TolB (426 aa).

The N-terminal stretch at Met1 to Ala25 is a signal peptide.

It belongs to the TolB family. As to quaternary structure, the Tol-Pal system is composed of five core proteins: the inner membrane proteins TolA, TolQ and TolR, the periplasmic protein TolB and the outer membrane protein Pal. They form a network linking the inner and outer membranes and the peptidoglycan layer.

It localises to the periplasm. Part of the Tol-Pal system, which plays a role in outer membrane invagination during cell division and is important for maintaining outer membrane integrity. The sequence is that of Tol-Pal system protein TolB from Polaromonas sp. (strain JS666 / ATCC BAA-500).